The sequence spans 156 residues: Transcription antitermination protein NusB (156 aa).

Belongs to the NusB family.

Functionally, involved in transcription antitermination. Required for transcription of ribosomal RNA (rRNA) genes. Binds specifically to the boxA antiterminator sequence of the ribosomal RNA (rrn) operons. In Bartonella tribocorum (strain CIP 105476 / IBS 506), this protein is Transcription antitermination protein NusB.